The primary structure comprises 122 residues: LOB domain-containing protein 5 (122 aa).

Residues 8 to 109 enclose the LOB domain; the sequence is RPCSVCITKN…AYLRELQEKI (102 aa).

It belongs to the LOB domain-containing protein family.

This chain is LOB domain-containing protein 5 (LBD5), found in Arabidopsis thaliana (Mouse-ear cress).